A 93-amino-acid polypeptide reads, in one-letter code: Small ribosomal subunit protein uS19c (93 aa).

The protein belongs to the universal ribosomal protein uS19 family.

The protein localises to the plastid. The protein resides in the chloroplast. Protein S19 forms a complex with S13 that binds strongly to the 16S ribosomal RNA. In Tetradesmus obliquus (Green alga), this protein is Small ribosomal subunit protein uS19c.